We begin with the raw amino-acid sequence, 233 residues long: Enolase-phosphatase E1 (233 aa).

This sequence belongs to the HAD-like hydrolase superfamily. MasA/MtnC family. In terms of assembly, monomer. It depends on Mg(2+) as a cofactor.

The catalysed reaction is 5-methylsulfanyl-2,3-dioxopentyl phosphate + H2O = 1,2-dihydroxy-5-(methylsulfanyl)pent-1-en-3-one + phosphate. It participates in amino-acid biosynthesis; L-methionine biosynthesis via salvage pathway; L-methionine from S-methyl-5-thio-alpha-D-ribose 1-phosphate: step 3/6. It functions in the pathway amino-acid biosynthesis; L-methionine biosynthesis via salvage pathway; L-methionine from S-methyl-5-thio-alpha-D-ribose 1-phosphate: step 4/6. Functionally, bifunctional enzyme that catalyzes the enolization of 2,3-diketo-5-methylthiopentyl-1-phosphate (DK-MTP-1-P) into the intermediate 2-hydroxy-3-keto-5-methylthiopentenyl-1-phosphate (HK-MTPenyl-1-P), which is then dephosphorylated to form the acireductone 1,2-dihydroxy-3-keto-5-methylthiopentene (DHK-MTPene). This is Enolase-phosphatase E1 from Hahella chejuensis (strain KCTC 2396).